We begin with the raw amino-acid sequence, 76 residues long: Serine proteinase inhibitor IA-1 (76 aa).

The residue at position 1 (Ser1) is an N-acetylserine.

Belongs to the protease inhibitor I9 family.

Its function is as follows. Specifically inhibits an endogenous intracellular serine proteinase (proteinase A). This chain is Serine proteinase inhibitor IA-1, found in Pleurotus ostreatus (Oyster mushroom).